A 209-amino-acid polypeptide reads, in one-letter code: Methylthioribulose-1-phosphate dehydratase (209 aa).

Zn(2+) contacts are provided by H99 and H101.

The protein belongs to the aldolase class II family. MtnB subfamily. The cofactor is Zn(2+).

The enzyme catalyses 5-(methylsulfanyl)-D-ribulose 1-phosphate = 5-methylsulfanyl-2,3-dioxopentyl phosphate + H2O. It participates in amino-acid biosynthesis; L-methionine biosynthesis via salvage pathway; L-methionine from S-methyl-5-thio-alpha-D-ribose 1-phosphate: step 2/6. In terms of biological role, catalyzes the dehydration of methylthioribulose-1-phosphate (MTRu-1-P) into 2,3-diketo-5-methylthiopentyl-1-phosphate (DK-MTP-1-P). This is Methylthioribulose-1-phosphate dehydratase from Leptospira biflexa serovar Patoc (strain Patoc 1 / Ames).